The following is a 311-amino-acid chain: Oxidoreductase NAD-binding domain-containing protein 1 (311 aa).

The signal sequence occupies residues 1–17 (MACAAVMIPGLLRCSVG). Positions 50-186 (HMERTASVLR…GGVGINPLLS (137 aa)) constitute an FAD-binding FR-type domain. 178–183 (GVGINP) provides a ligand contact to NAD(+).

This chain is Oxidoreductase NAD-binding domain-containing protein 1 (OXNAD1), found in Pongo abelii (Sumatran orangutan).